The sequence spans 572 residues: Proline--tRNA ligase (572 aa).

Belongs to the class-II aminoacyl-tRNA synthetase family. ProS type 1 subfamily. As to quaternary structure, homodimer.

The protein resides in the cytoplasm. It carries out the reaction tRNA(Pro) + L-proline + ATP = L-prolyl-tRNA(Pro) + AMP + diphosphate. Functionally, catalyzes the attachment of proline to tRNA(Pro) in a two-step reaction: proline is first activated by ATP to form Pro-AMP and then transferred to the acceptor end of tRNA(Pro). As ProRS can inadvertently accommodate and process non-cognate amino acids such as alanine and cysteine, to avoid such errors it has two additional distinct editing activities against alanine. One activity is designated as 'pretransfer' editing and involves the tRNA(Pro)-independent hydrolysis of activated Ala-AMP. The other activity is designated 'posttransfer' editing and involves deacylation of mischarged Ala-tRNA(Pro). The misacylated Cys-tRNA(Pro) is not edited by ProRS. In Escherichia coli O139:H28 (strain E24377A / ETEC), this protein is Proline--tRNA ligase.